We begin with the raw amino-acid sequence, 73 residues long: Putative antimicrobial peptide clone 5 (73 aa).

The N-terminal stretch at 1-22 is a signal peptide; that stretch reads MQIKHLITLFFLVLIGADQCSA. A propeptide spanning residues 45–73 is cleaved from the precursor; sequence EVSPQIDQYRNFQKREAELEELLDRLPMY.

This sequence belongs to the non-disulfide-bridged peptide (NDBP) superfamily. Short antimicrobial peptide (group 4) family. In terms of tissue distribution, expressed by the venom gland.

It is found in the secreted. Antibacterial peptide. This is Putative antimicrobial peptide clone 5 from Tityus costatus (Brazilian scorpion).